Consider the following 371-residue polypeptide: UDP-N-acetylglucosamine--N-acetylmuramyl-(pentapeptide) pyrophosphoryl-undecaprenol N-acetylglucosamine transferase (371 aa).

UDP-N-acetyl-alpha-D-glucosamine-binding positions include 10-12 (TGG), Asn124, Arg165, Ser197, Ile251, and Gln296.

The protein belongs to the glycosyltransferase 28 family. MurG subfamily.

It is found in the cell membrane. The catalysed reaction is di-trans,octa-cis-undecaprenyl diphospho-N-acetyl-alpha-D-muramoyl-L-alanyl-D-glutamyl-meso-2,6-diaminopimeloyl-D-alanyl-D-alanine + UDP-N-acetyl-alpha-D-glucosamine = di-trans,octa-cis-undecaprenyl diphospho-[N-acetyl-alpha-D-glucosaminyl-(1-&gt;4)]-N-acetyl-alpha-D-muramoyl-L-alanyl-D-glutamyl-meso-2,6-diaminopimeloyl-D-alanyl-D-alanine + UDP + H(+). Its pathway is cell wall biogenesis; peptidoglycan biosynthesis. Its function is as follows. Cell wall formation. Catalyzes the transfer of a GlcNAc subunit on undecaprenyl-pyrophosphoryl-MurNAc-pentapeptide (lipid intermediate I) to form undecaprenyl-pyrophosphoryl-MurNAc-(pentapeptide)GlcNAc (lipid intermediate II). The polypeptide is UDP-N-acetylglucosamine--N-acetylmuramyl-(pentapeptide) pyrophosphoryl-undecaprenol N-acetylglucosamine transferase (Carboxydothermus hydrogenoformans (strain ATCC BAA-161 / DSM 6008 / Z-2901)).